We begin with the raw amino-acid sequence, 1755 residues long: E3 ubiquitin-protein ligase UBR2 (1755 aa).

A2 carries the N-acetylalanine modification. A Glycyl lysine isopeptide (Lys-Gly) (interchain with G-Cter in ubiquitin) cross-link involves residue K94. The UBR-type zinc-finger motif lies at 97-168 (HLCGRVFKVG…EGPYCQKHKL (72 aa)). C99, C112, C115, C124, C127, H133, and H136 together coordinate Zn(2+). F148 contacts a peptide. Residue C149 coordinates Zn(2+). D150 is a binding site for a peptide. C151 contacts Zn(2+). An a peptide-binding site is contributed by D153. A Glycyl lysine isopeptide (Lys-Gly) (interchain with G-Cter in ubiquitin) cross-link involves residue K158. Residue C163 coordinates Zn(2+). K165 participates in a covalent cross-link: Glycyl lysine isopeptide (Lys-Gly) (interchain with G-Cter in ubiquitin). H166 serves as a coordination point for Zn(2+). Glycyl lysine isopeptide (Lys-Gly) (interchain with G-Cter in ubiquitin) cross-links involve residues K248, K255, and K470. The residue at position 476 (S476) is a Phosphoserine. Residues K488, K568, K779, and K789 each participate in a glycyl lysine isopeptide (Lys-Gly) (interchain with G-Cter in ubiquitin) cross-link. Residues 1012 to 1033 (AEAEGTIMEESSRDKDKAERKR) are disordered. Positions 1019 to 1054 (MEESSRDKDKAERKRKAEIARLRREKIMAQMSEMQR) form a coiled coil. The span at 1021-1033 (ESSRDKDKAERKR) shows a compositional bias: basic and acidic residues. Residues C1108, C1111, C1168, H1170, H1173, C1176, C1210, and C1213 each contribute to the Zn(2+) site. Residues 1108–1214 (CILCQEEQEV…NGEFLCPLCE (107 aa)) form an RING-type; atypical zinc finger. Residues K1496, K1599, and K1689 each participate in a glycyl lysine isopeptide (Lys-Gly) (interchain with G-Cter in ubiquitin) cross-link. Phosphoserine is present on S1694. Y1697 bears the Phosphotyrosine mark.

The protein belongs to the E3 ubiquitin-protein ligase UBR1-like family. Interacts with UBE2B; promotes the UBE2B-H2A interaction and the ubiquitination of histone H2A by UBE2B and UBR2. Interacts with RECQL4. Interacts with Tex19.1 and Tex19.2; does not lead to Tex19.1 degradation and stabilizes it. Interacts with L1RE1. Interacts with CASP8. Interacts with ATXN3. Interacts with UBE2O. In terms of processing, dephosphorylated by DUSP22 at Ser-1694 and Tyr-1697, leading to subsequent ubiquitination and proteasomal degradation. Post-translationally, 'Lys-48'-linked ubiquitinated at Lys-94, Lys-779 and Lys-1599 following DUSP22-mediated dephosphorylation of Ser-1694 and Tyr-1697 which promotes UBR2 interaction with the SCF(FBW1A) E3 ubiquitin-protein ligase complex. In terms of tissue distribution, highly expressed in skeletal muscle. Also expressed in heart, kidney and testis. Expressed in acinar cells of the pancreas. In testes, expressed primarily in spermatocytes. Expressed in cerebellum.

It localises to the nucleus. It is found in the chromosome. It carries out the reaction S-ubiquitinyl-[E2 ubiquitin-conjugating enzyme]-L-cysteine + [acceptor protein]-L-lysine = [E2 ubiquitin-conjugating enzyme]-L-cysteine + N(6)-ubiquitinyl-[acceptor protein]-L-lysine.. It functions in the pathway protein modification; protein ubiquitination. Its function is as follows. E3 ubiquitin-protein ligase which is a component of the N-end rule pathway. Recognizes and binds to proteins bearing specific N-terminal residues (N-degrons) that are destabilizing according to the N-end rule, leading to their ubiquitination and subsequent degradation. Recognizes both type-1 and type-2 N-degrons, containing positively charged amino acids (Arg, Lys and His) and bulky and hydrophobic amino acids, respectively. Does not ubiquitinate proteins that are acetylated at the N-terminus. In contrast, it strongly binds methylated N-degrons. Plays a critical role in chromatin inactivation and chromosome-wide transcriptional silencing during meiosis via ubiquitination of histone H2A. Binds leucine and is a negative regulator of the leucine-mTOR signaling pathway, thereby controlling cell growth. Required for spermatogenesis, promotes, with Tex19.1, SPO11-dependent recombination foci to accumulate and drive robust homologous chromosome synapsis. Polyubiquitinates LINE-1 retrotransposon encoded, LIRE1, which induces degradation, inhibiting LINE-1 retrotransposon mobilization. Catalyzes ubiquitination and degradation of the N-terminal part of NLRP1B following NLRP1B activation by pathogens and other damage-associated signals: ubiquitination promotes degradation of the N-terminal part and subsequent release of the cleaved C-terminal part of NLRP1B, which polymerizes and forms the NLRP1B inflammasome followed by host cell pyroptosis. Plays a role in T-cell receptor signaling by inducing 'Lys-63'-linked ubiquitination of lymphocyte cell-specific kinase LCK. This activity is regulated by DUSP22, which induces 'Lys-48'-linked ubiquitination of UBR2, leading to its proteasomal degradation by SCF E3 ubiquitin-protein ligase complex. The protein is E3 ubiquitin-protein ligase UBR2 of Mus musculus (Mouse).